The following is a 277-amino-acid chain: Ribosomal RNA small subunit methyltransferase A (277 aa).

S-adenosyl-L-methionine is bound by residues Asn24, Leu26, Gly51, Glu72, Asp96, and Asn123.

The protein belongs to the class I-like SAM-binding methyltransferase superfamily. rRNA adenine N(6)-methyltransferase family. RsmA subfamily.

It localises to the cytoplasm. It carries out the reaction adenosine(1518)/adenosine(1519) in 16S rRNA + 4 S-adenosyl-L-methionine = N(6)-dimethyladenosine(1518)/N(6)-dimethyladenosine(1519) in 16S rRNA + 4 S-adenosyl-L-homocysteine + 4 H(+). In terms of biological role, specifically dimethylates two adjacent adenosines (A1518 and A1519) in the loop of a conserved hairpin near the 3'-end of 16S rRNA in the 30S particle. May play a critical role in biogenesis of 30S subunits. The chain is Ribosomal RNA small subunit methyltransferase A from Ureaplasma parvum serovar 3 (strain ATCC 27815 / 27 / NCTC 11736).